Reading from the N-terminus, the 335-residue chain is Methionyl-tRNA formyltransferase (335 aa).

122-125 provides a ligand contact to (6S)-5,6,7,8-tetrahydrofolate; it reads SLLP. The segment at 203–222 is disordered; sequence DSHGPLGEPQDPAKVSKAPR.

It belongs to the Fmt family.

It carries out the reaction L-methionyl-tRNA(fMet) + (6R)-10-formyltetrahydrofolate = N-formyl-L-methionyl-tRNA(fMet) + (6S)-5,6,7,8-tetrahydrofolate + H(+). Functionally, attaches a formyl group to the free amino group of methionyl-tRNA(fMet). The formyl group appears to play a dual role in the initiator identity of N-formylmethionyl-tRNA by promoting its recognition by IF2 and preventing the misappropriation of this tRNA by the elongation apparatus. The protein is Methionyl-tRNA formyltransferase of Rhodopirellula baltica (strain DSM 10527 / NCIMB 13988 / SH1).